Here is a 133-residue protein sequence, read N- to C-terminus: Profilin-4 (133 aa).

An intrachain disulfide couples Cys-13 to Cys-117. The short motif at 83–99 is the Involved in PIP2 interaction element; that stretch reads AVIRGKKGSGGITIKKT. The residue at position 113 (Thr-113) is a Phosphothreonine.

Belongs to the profilin family. In terms of assembly, occurs in many kinds of cells as a complex with monomeric actin in a 1:1 ratio. In terms of processing, phosphorylated by MAP kinases.

Its subcellular location is the cytoplasm. The protein resides in the cytoskeleton. Its function is as follows. Binds to actin and affects the structure of the cytoskeleton. At high concentrations, profilin prevents the polymerization of actin, whereas it enhances it at low concentrations. In Corylus avellana (European hazel), this protein is Profilin-4.